Consider the following 483-residue polypeptide: UDP-N-acetylmuramoylalanine--D-glutamate ligase (483 aa).

ATP is bound at residue 119-125 (GTNGKTT).

Belongs to the MurCDEF family.

Its subcellular location is the cytoplasm. The enzyme catalyses UDP-N-acetyl-alpha-D-muramoyl-L-alanine + D-glutamate + ATP = UDP-N-acetyl-alpha-D-muramoyl-L-alanyl-D-glutamate + ADP + phosphate + H(+). It participates in cell wall biogenesis; peptidoglycan biosynthesis. Cell wall formation. Catalyzes the addition of glutamate to the nucleotide precursor UDP-N-acetylmuramoyl-L-alanine (UMA). The polypeptide is UDP-N-acetylmuramoylalanine--D-glutamate ligase (Mycolicibacterium vanbaalenii (strain DSM 7251 / JCM 13017 / BCRC 16820 / KCTC 9966 / NRRL B-24157 / PYR-1) (Mycobacterium vanbaalenii)).